We begin with the raw amino-acid sequence, 342 residues long: Dihydroorotate dehydrogenase (quinone) (342 aa).

FMN contacts are provided by residues 60 to 64 (AGLDK) and T84. K64 is a substrate binding site. Residue 109–113 (NRMGF) coordinates substrate. The FMN site is built by N137 and N170. Residue N170 coordinates substrate. S173 (nucleophile) is an active-site residue. N175 is a substrate binding site. 2 residues coordinate FMN: K215 and T243. 244–245 (NT) serves as a coordination point for substrate. FMN contacts are provided by residues G266, G295, and 316 to 317 (YS).

This sequence belongs to the dihydroorotate dehydrogenase family. Type 2 subfamily. As to quaternary structure, monomer. FMN serves as cofactor.

The protein localises to the cell membrane. It carries out the reaction (S)-dihydroorotate + a quinone = orotate + a quinol. It participates in pyrimidine metabolism; UMP biosynthesis via de novo pathway; orotate from (S)-dihydroorotate (quinone route): step 1/1. Catalyzes the conversion of dihydroorotate to orotate with quinone as electron acceptor. This chain is Dihydroorotate dehydrogenase (quinone), found in Nitrosomonas europaea (strain ATCC 19718 / CIP 103999 / KCTC 2705 / NBRC 14298).